The sequence spans 519 residues: MRFGVLISVFVAIVSALPLQEGPLNKRAYPSFEAYSNYKVDRTDLETFLDKQKDVSLYYLLQNIAYPEGQFNDGVPGTVIASPSTSNPDYYYQWTRDSAITFLTVLSELEDNNFNTTLAKAVEYYINTSYNLQRTSNPSGSFDDENHKGLGEPKFNTDGSAYTGAWGRPQNDGPALRAYAISRYLNDVNSLNKGKLVLTDSGDINFSSTEDIYKNIIKPDLEYVIGYWDSTGFDLWEENQGRHFFTSLVQQKALAYAVDIAKSFDDGDFANTLSSTASTLESYLSGSDGGFVNTDVNHIVENPDLLQQNSRQGLDSATYIGPLLTHDIGESSSTPFDVDNEYVLQSYYLLLEDNKDRYSVNSAYSAGAAIGRYPEDVYNGDGSSEGNPWFLATAYAAQVPYKLVYDAKSASNDITINKINYDFFNKYIVDLSTINSGYQSSDSVTIKSGSDEFNTVADNLVTFGDSFLQVILDHINDDGSLNEQLNRNTGYSTSAYSLTWSSGALLEAIRLRNKVKALA.

The signal sequence occupies residues 1 to 27; it reads MRFGVLISVFVAIVSALPLQEGPLNKR. 2 N-linked (GlcNAc...) asparagine glycosylation sites follow: asparagine 115 and asparagine 127. A substrate-binding site is contributed by tryptophan 166. N-linked (GlcNAc...) asparagine glycosylation occurs at asparagine 205. The active-site Proton acceptor is the aspartate 234. Glutamate 237 serves as the catalytic Proton donor.

This sequence belongs to the glycosyl hydrolase 15 family.

The catalysed reaction is Hydrolysis of terminal (1-&gt;4)-linked alpha-D-glucose residues successively from non-reducing ends of the chains with release of beta-D-glucose.. In Saccharomycopsis fibuligera (Yeast), this protein is Glucoamylase GLA1 (GLA1).